The following is a 172-amino-acid chain: RNA silencing suppressor p19 (172 aa).

Residues 153–172 are disordered; sequence EGNVSGGSPEGIEAFEKESE.

The protein belongs to the tombusvirus protein p19 family. As to quaternary structure, homodimer.

Functionally, viral suppressor of RNA silencing which binds specifically to silencing RNAs (siRNAs). Acts as a molecular caliper to specifically select siRNAs based on the length of the duplex region of the RNA. This is RNA silencing suppressor p19 from Pelargonium zonale (PeNSV).